Reading from the N-terminus, the 146-residue chain is Snaclec echicetin subunit beta (146 aa).

An N-terminal signal peptide occupies residues 1 to 23 (MGRFISVSFGLLVLLLSLSGTGA). Disulfide bonds link Cys25–Cys36, Cys53–Cys142, and Cys119–Cys134. The 112-residue stretch at 32–143 (YEGYCYKVFK…CTWTFSFVCK (112 aa)) folds into the C-type lectin domain.

The protein belongs to the snaclec family. In terms of assembly, heterodimer of subunits alpha and beta; disulfide-linked. As to expression, expressed by the venom gland.

The protein localises to the secreted. In terms of biological role, binding of echicetin to glycoprotein Ibalpha (GP1BA) receptor on platelets alone results in inhibition of platelet aggregation, while binding to both GPIba receptor and IgMk promotes platelet aggregation and signal transduction. This is Snaclec echicetin subunit beta from Echis carinatus (Saw-scaled viper).